A 217-amino-acid chain; its full sequence is Protein-L-isoaspartate O-methyltransferase 2 (217 aa).

The active site involves S64.

The protein belongs to the methyltransferase superfamily. L-isoaspartyl/D-aspartyl protein methyltransferase family.

The protein localises to the cytoplasm. The enzyme catalyses [protein]-L-isoaspartate + S-adenosyl-L-methionine = [protein]-L-isoaspartate alpha-methyl ester + S-adenosyl-L-homocysteine. Its function is as follows. Catalyzes the methyl esterification of L-isoaspartyl residues in peptides and proteins that result from spontaneous decomposition of normal L-aspartyl and L-asparaginyl residues. It plays a role in the repair and/or degradation of damaged proteins. In Rhodopseudomonas palustris (strain HaA2), this protein is Protein-L-isoaspartate O-methyltransferase 2.